The chain runs to 316 residues: Methionyl-tRNA formyltransferase (316 aa).

Serine 108–proline 111 is a (6S)-5,6,7,8-tetrahydrofolate binding site.

Belongs to the Fmt family.

It carries out the reaction L-methionyl-tRNA(fMet) + (6R)-10-formyltetrahydrofolate = N-formyl-L-methionyl-tRNA(fMet) + (6S)-5,6,7,8-tetrahydrofolate + H(+). Attaches a formyl group to the free amino group of methionyl-tRNA(fMet). The formyl group appears to play a dual role in the initiator identity of N-formylmethionyl-tRNA by promoting its recognition by IF2 and preventing the misappropriation of this tRNA by the elongation apparatus. The polypeptide is Methionyl-tRNA formyltransferase (Heliobacterium modesticaldum (strain ATCC 51547 / Ice1)).